A 207-amino-acid chain; its full sequence is Outer-membrane lipoprotein carrier protein (207 aa).

The first 21 residues, Met1–Ala21, serve as a signal peptide directing secretion.

Belongs to the LolA family. In terms of assembly, monomer.

The protein resides in the periplasm. In terms of biological role, participates in the translocation of lipoproteins from the inner membrane to the outer membrane. Only forms a complex with a lipoprotein if the residue after the N-terminal Cys is not an aspartate (The Asp acts as a targeting signal to indicate that the lipoprotein should stay in the inner membrane). This is Outer-membrane lipoprotein carrier protein from Azotobacter vinelandii (strain DJ / ATCC BAA-1303).